We begin with the raw amino-acid sequence, 758 residues long: Probable TonB-dependent receptor NMB0964 (758 aa).

The signal sequence occupies residues 1-24 (MAQTTLKPIVLSILLINTPLLAQA). In terms of domain architecture, TBDR plug spans 50–161 (LLHTSTASDK…VAGLVDVADG (112 aa)). Positions 171 to 758 (GVSGELGLRL…SFTGGVNVKF (588 aa)) constitute a TBDR beta-barrel domain. The TonB C-terminal box motif lies at 741–758 (SDTPQMGRSFTGGVNVKF).

It belongs to the TonB-dependent receptor family.

The protein resides in the cell outer membrane. Probable receptor, TonB-dependent. This is Probable TonB-dependent receptor NMB0964 from Neisseria meningitidis serogroup B (strain ATCC BAA-335 / MC58).